Here is a 146-residue protein sequence, read N- to C-terminus: Cytochrome c oxidase subunit 5A, mitochondrial (146 aa).

The N-terminal 37 residues, 1-37 (MLAAALRRCTAAAAARGLLHPASAPSPAAAVCSIRCY), are a transit peptide targeting the mitochondrion. An SIFI-degron motif is present at residues 2-16 (LAAALRRCTAAAAAR). An N6-acetyllysine mark is found at lysine 83 and lysine 109. Residue threonine 137 is modified to Phosphothreonine.

This sequence belongs to the cytochrome c oxidase subunit 5A family. In terms of assembly, component of the cytochrome c oxidase (complex IV, CIV), a multisubunit enzyme composed of 14 subunits. The complex is composed of a catalytic core of 3 subunits MT-CO1, MT-CO2 and MT-CO3, encoded in the mitochondrial DNA, and 11 supernumerary subunits COX4I, COX5A, COX5B, COX6A, COX6B, COX6C, COX7A, COX7B, COX7C, COX8 and NDUFA4, which are encoded in the nuclear genome. The complex exists as a monomer or a dimer and forms supercomplexes (SCs) in the inner mitochondrial membrane with NADH-ubiquinone oxidoreductase (complex I, CI) and ubiquinol-cytochrome c oxidoreductase (cytochrome b-c1 complex, complex III, CIII), resulting in different assemblies (supercomplex SCI(1)III(2)IV(1) and megacomplex MCI(2)III(2)IV(2)). Interacts with AFG1L. Interacts with RAB5IF. Post-translationally, in response to mitochondrial stress, the precursor protein is ubiquitinated by the SIFI complex in the cytoplasm before mitochondrial import, leading to its degradation. Within the SIFI complex, UBR4 initiates ubiquitin chain that are further elongated or branched by KCMF1.

It localises to the mitochondrion inner membrane. Its pathway is energy metabolism; oxidative phosphorylation. Its function is as follows. Component of the cytochrome c oxidase, the last enzyme in the mitochondrial electron transport chain which drives oxidative phosphorylation. The respiratory chain contains 3 multisubunit complexes succinate dehydrogenase (complex II, CII), ubiquinol-cytochrome c oxidoreductase (cytochrome b-c1 complex, complex III, CIII) and cytochrome c oxidase (complex IV, CIV), that cooperate to transfer electrons derived from NADH and succinate to molecular oxygen, creating an electrochemical gradient over the inner membrane that drives transmembrane transport and the ATP synthase. Cytochrome c oxidase is the component of the respiratory chain that catalyzes the reduction of oxygen to water. Electrons originating from reduced cytochrome c in the intermembrane space (IMS) are transferred via the dinuclear copper A center (CU(A)) of subunit 2 and heme A of subunit 1 to the active site in subunit 1, a binuclear center (BNC) formed by heme A3 and copper B (CU(B)). The BNC reduces molecular oxygen to 2 water molecules using 4 electrons from cytochrome c in the IMS and 4 protons from the mitochondrial matrix. The chain is Cytochrome c oxidase subunit 5A, mitochondrial (Cox5a) from Mus musculus (Mouse).